We begin with the raw amino-acid sequence, 508 residues long: Putative glycosyl hydrolase ecdF (508 aa).

The N-terminal stretch at 1 to 15 is a signal peptide; the sequence is MFLHILCLLAGQALA. Asn99, Asn122, Asn275, and Asn362 each carry an N-linked (GlcNAc...) asparagine glycan.

This sequence belongs to the glycosyl hydrolase 32 family.

In Aspergillus rugulosus (Emericella rugulosa), this protein is Putative glycosyl hydrolase ecdF.